The following is a 931-amino-acid chain: Aconitate hydratase A (931 aa).

The segment at 402–454 (SASPVDEASAESFPASDAPAYGSQENGAGAPQHADGTGAAVPSNPVTVTAPDG) is disordered. Residues cysteine 472, cysteine 538, and cysteine 541 each contribute to the [4Fe-4S] cluster site.

Belongs to the aconitase/IPM isomerase family. [4Fe-4S] cluster serves as cofactor.

The enzyme catalyses citrate = D-threo-isocitrate. The catalysed reaction is citrate = cis-aconitate + H2O. It carries out the reaction cis-aconitate + H2O = D-threo-isocitrate. Its pathway is carbohydrate metabolism; tricarboxylic acid cycle; isocitrate from oxaloacetate: step 2/2. Catalyzes the reversible isomerization of citrate to isocitrate via cis-aconitate in the tricarboxylic acid (TCA) cycle. Aconitase activity is important for the initiation of morphological and physiological differentiation of S.viridochromogenes. In addition, the apo form of AcnA (lacking the [4Fe-4S] cluster) functions as a RNA-binding regulatory protein, which binds to iron responsive elements (IREs) located on the untranslated region of certain mRNAs, including recA and ftsZ. Binding to IRE-like structures probably alters the target mRNA stability and regulates the protein amount. The apo form plays a regulatory role in oxidative stress response. This Streptomyces viridochromogenes (strain DSM 40736 / JCM 4977 / BCRC 1201 / Tue 494) protein is Aconitate hydratase A.